A 284-amino-acid chain; its full sequence is MKLIAVGDNVVDYYQDQETFYPGGNALNVAVLAKRLGHESSYIGIVGNDEAAAHLLNVLKLEQVNADYIRQAHGENGMAIVTLDEQGDRIFVRSNKGGIQSRLRLAFQEKDVSFISGHDLLHTSVYSRLENDLPQLCGLVPVSFDFSTNREDDYLRRVCPYVTYAFFSGSDLSESECGELAKTAHGYGAKMVCMTRGGQGAILSAGDRVYHQPIVEADIIDTLGAGDSFIAGFLTAFCVKQDITYALRQAAETAAKTCGVYGAFGYGYPYRLEDGGSSEKTRIL.

It belongs to the carbohydrate kinase PfkB family.

Its function is as follows. Catalyzes the phosphorylation of a range of fructosamines to fructosamine 6-phosphates. This Bacillus subtilis (strain 168) protein is Fructosamine kinase FrlD (frlD).